Reading from the N-terminus, the 520-residue chain is GMP synthase [glutamine-hydrolyzing] (520 aa).

In terms of domain architecture, Glutamine amidotransferase type-1 spans 8-202; that stretch reads RLLIIDFGSQ…FVRLAGFTGD (195 aa). The active-site Nucleophile is the Cys-86. Active-site residues include His-177 and Glu-179. Residues 203 to 395 enclose the GMPS ATP-PPase domain; sequence WTMDAYREQA…LGLPASFIGR (193 aa). 230–236 lines the ATP pocket; the sequence is SGGVDSS.

As to quaternary structure, homodimer.

It carries out the reaction XMP + L-glutamine + ATP + H2O = GMP + L-glutamate + AMP + diphosphate + 2 H(+). It participates in purine metabolism; GMP biosynthesis; GMP from XMP (L-Gln route): step 1/1. Its function is as follows. Catalyzes the synthesis of GMP from XMP. This chain is GMP synthase [glutamine-hydrolyzing], found in Dinoroseobacter shibae (strain DSM 16493 / NCIMB 14021 / DFL 12).